A 309-amino-acid chain; its full sequence is Taste receptor type 2 member 114 (309 aa).

Topologically, residues 1-7 are extracellular; the sequence is MLGAMEG. A helical transmembrane segment spans residues 8–28; that stretch reads VLLSVATSEALLGIVGNTFIA. Over 29–43 the chain is Cytoplasmic; the sequence is LVNCMDCTRNKNLYN. The helical transmembrane segment at 44–64 threads the bilayer; that stretch reads IGFILTGLAISRICLVWILIT. At 65–87 the chain is on the extracellular side; sequence EAYIKIFSPQLLSPINIIELISY. Residues 88 to 108 form a helical membrane-spanning segment; sequence LWIITSQLNVWFATSLSIFYF. The Cytoplasmic segment spans residues 109–127; it reads LKIANFSHHIFLWLKRRIN. Residues 128–148 form a helical membrane-spanning segment; it reads IVFAFLIGCLLMSWLFSFPVV. At 149 to 182 the chain is on the extracellular side; it reads VKMVKDKKMLYINSSWQIHMKKSELIINYVFTNG. An N-linked (GlcNAc...) asparagine glycan is attached at asparagine 161. A helical membrane pass occupies residues 183 to 203; sequence GVFLLFIIMLIVCFLLIISLW. At 204–233 the chain is on the cytoplasmic side; that stretch reads RHSKWMQSNESGFRDLNTEVHVKTIKVLLS. Residues 234–254 form a helical membrane-spanning segment; sequence FIILFILHLIGITINVICLLV. Topologically, residues 255 to 259 are extracellular; the sequence is PENNL. The helical transmembrane segment at 260-280 threads the bilayer; the sequence is LFVFGLTIAFLYPCCHSLILI. Residues 281–309 are Cytoplasmic-facing; sequence LANSRLKRCFVRILQQLMCSEEGKEFRNT.

It belongs to the G-protein coupled receptor T2R family.

The protein localises to the membrane. Its function is as follows. Putative taste receptor which may play a role in the perception of bitterness. The protein is Taste receptor type 2 member 114 of Rattus norvegicus (Rat).